Here is a 521-residue protein sequence, read N- to C-terminus: MRLHAFTLLSLLGLVPSFAAASLSGSVGPLTSASAKAAKKTCNVLDYGAKADKKTDLGPPLAAAFAACKSGGLVYIPAGDYAMSTWVKLANGKAWALQIDGVIYRTGTDGGNMIMIEHTSDFELYSSTSSGAMQGLGYEFHASNNWSGPRLLRLWDVSDFSVHDLILVDSPSFHFSIDTCSNGEVYNMAIRGGNHGGLDGVDVWSTNIWIHDLEVTNKDECVTVKSPAKNILVENIYCNLSGGCAMGSLGADTDISDITYKNIYTWNSNQMMMIKSNGGSGTVSNVVFENFIGHGNAYSLDIDSFWSSMSAVSGDGVTLNNITIKNWKGTEANGAQRGPIKIICPDKVPCYNILIEDFAMWTETGSKQWYSCQSAYGSGFCLKSGSHHTSYAVTTTTVSSAPSGYSAAKMASDLSTDSGSTKSIPIPTIPTSFYPGATPYSALMSKQSTKAAKARAVDMSVETPAAASRSEQVVQGAPQETGQSAPESAGPVPSGNPGPVPTGGSRPSRHRHGHHHFGSAI.

A signal peptide spans 1 to 21 (MRLHAFTLLSLLGLVPSFAAA). Cysteines 42 and 68 form a disulfide. Asparagine 145 carries an N-linked (GlcNAc...) asparagine glycan. Aspartate 219 functions as the Proton donor in the catalytic mechanism. A disulfide bridge connects residues cysteine 221 and cysteine 238. The N-linked (GlcNAc...) asparagine glycan is linked to asparagine 239. Histidine 294 is a catalytic residue. Asparagine 321 carries an N-linked (GlcNAc...) asparagine glycan. Disulfide bonds link cysteine 344–cysteine 350 and cysteine 372–cysteine 381. A disordered region spans residues 462–521 (ETPAAASRSEQVVQGAPQETGQSAPESAGPVPSGNPGPVPTGGSRPSRHRHGHHHFGSAI). Positions 469–486 (RSEQVVQGAPQETGQSAP) are enriched in polar residues. Basic residues predominate over residues 507 to 521 (PSRHRHGHHHFGSAI).

This sequence belongs to the glycosyl hydrolase 28 family.

The protein resides in the secreted. The catalysed reaction is Endohydrolysis of alpha-D-GalA-(1-&gt;2)-alpha-L-Rha glycosidic bond in the rhamnogalacturonan I backbone with initial inversion of anomeric configuration releasing oligosaccharides with beta-D-GalA at the reducing end.. In terms of biological role, pectinolytic enzymes consist of four classes of enzymes: pectine lyase, polygalacturonase, pectin methylesterase and rhamnogalacturonase. Hydrolyzes alpha-D-galacturonopyranosyl-(1,2)-alpha-L-rhamnopyranosyl linkages in the backbone of the hairy regions of pectins. The sequence is that of Probable rhamnogalacturonase B (rhgB) from Aspergillus fumigatus (strain ATCC MYA-4609 / CBS 101355 / FGSC A1100 / Af293) (Neosartorya fumigata).